The following is a 226-amino-acid chain: Thymidylate kinase (226 aa).

Position 9–16 (Gly9–Ser16) interacts with ATP.

The protein belongs to the thymidylate kinase family.

It catalyses the reaction dTMP + ATP = dTDP + ADP. Functionally, phosphorylation of dTMP to form dTDP in both de novo and salvage pathways of dTTP synthesis. This chain is Thymidylate kinase, found in Roseiflexus sp. (strain RS-1).